The sequence spans 498 residues: Resveratrol cleavage oxygenase 1 (498 aa).

Tyr105 and Lys136 together coordinate piceatannol. Trans-resveratrol is bound by residues Tyr105 and Lys136. Fe cation is bound by residues His169, His220, and His285. Glu355 is a binding site for piceatannol. Position 355 (Glu355) interacts with trans-resveratrol. His481 provides a ligand contact to Fe cation.

Belongs to the carotenoid oxygenase family. The cofactor is Fe(2+).

It catalyses the reaction trans-resveratrol + O2 = 3,5-dihydroxybenzaldehyde + 4-hydroxybenzaldehyde. The catalysed reaction is piceatannol + O2 = 3,5-dihydroxybenzaldehyde + 3,4-dihydroxybenzaldehyde. Functionally, dioxygenase that cleaves the interphenyl C-alpha-C-beta double bond of resveratrol to yield 3,5-dihydroxybenzaldehyde and 4-hydroxybenzaldehyde. Also cleaves piceatannol, a compound that differs from resveratrol only in the occurrence of an additional hydroxyl group, which leads to the production of 3,4-dihydroxybenzaldehyde and 3,5-hydroxybenzaldehyde. The protein is Resveratrol cleavage oxygenase 1 of Aspergillus fumigatus (strain ATCC MYA-4609 / CBS 101355 / FGSC A1100 / Af293) (Neosartorya fumigata).